The primary structure comprises 249 residues: Probable transcriptional regulatory protein Tgr7_2237 (249 aa).

This sequence belongs to the TACO1 family.

Its subcellular location is the cytoplasm. This is Probable transcriptional regulatory protein Tgr7_2237 from Thioalkalivibrio sulfidiphilus (strain HL-EbGR7).